Consider the following 587-residue polypeptide: Nucleoporin ndc-1 (587 aa).

Over 1 to 79 (MMGENSSAYT…FHSEIDVRKK (79 aa)) the chain is Cytoplasmic. The disordered stretch occupies residues 32–55 (ASTSATSSPNLRKSPNRGFSSPRA). A helical transmembrane segment spans residues 80-100 (LASFVCGAAVALSFIVTVSIL). The Perinuclear space portion of the chain corresponds to 101 to 121 (KLSIWAPFSSVQDSLTWWLYP). The chain crosses the membrane as a helical span at residues 122 to 142 (TSWPVTLFIWLSSVAWTFLII). The Cytoplasmic portion of the chain corresponds to 143-161 (HQFCTVTQVPRIPITDTYA). A helical membrane pass occupies residues 162 to 182 (WAGAALEFVHRLIFVYTAFTV). Residues 183–187 (SESSF) are Perinuclear space-facing. A helical transmembrane segment spans residues 188–208 (FEDFAWIAIAFSVAISSALVI). The Cytoplasmic portion of the chain corresponds to 209-255 (FRSDFHLNFSNVQVNSFKTLIDFAKSLPYGSLAETSGVDAAIAYTAA). Residues 256–276 (MALTVFGSPLLWGFSAWWLLI) traverse the membrane as a helical segment. The Perinuclear space segment spans residues 277–281 (NIQFH). A helical membrane pass occupies residues 282 to 302 (LVLFGVCFAQQFFAKIFMKIV). Residues 303–587 (NQIVMKPMKF…TIKLVCAEEI (285 aa)) are Cytoplasmic-facing.

This sequence belongs to the NDC1 family.

It is found in the nucleus. Its subcellular location is the nuclear pore complex. It localises to the nucleus membrane. Component of the nuclear pore complex (NPC), which plays a key role in de novo assembly and insertion of NPC in the nuclear envelope. The chain is Nucleoporin ndc-1 (npp-22) from Caenorhabditis briggsae.